A 473-amino-acid polypeptide reads, in one-letter code: Sphingosine kinase 1 (473 aa).

One can recognise a DAGKc domain in the interval 83–233 (QCRGNLLVFI…VALYSVKTDN (151 aa)). ATP contacts are provided by residues 93–95 (NPN) and 125–129 (TTGPN). 151-154 (SGDG) is a binding site for substrate. Asp-153 acts as the Proton donor/acceptor in catalysis. ATP contacts are provided by residues Glu-158 and 184–186 (GSG). Asp-251 contributes to the substrate binding site. Residues Arg-258, Arg-265, and 448 to 450 (DGE) each bind ATP.

The cofactor is Mg(2+). As to expression, expressed in the majority of cholinergic and GABAergic neurons, body wall muscle, excretory canal cells, intestine, and hypodermis.

The protein resides in the presynaptic cell membrane. Its subcellular location is the cell projection. The protein localises to the axon. It localises to the perikaryon. It is found in the mitochondrion membrane. It carries out the reaction a sphingoid base + ATP = a sphingoid 1-phosphate + ADP + H(+). The catalysed reaction is 15-methylhexadecasphing-4-enine + ATP = 15-methylhexadecasphing-4-enine 1-phosphate + ADP + H(+). The enzyme catalyses 15-methylhexadecasphinganine + ATP = 15-methylhexadecasphinganine 1-phosphate + ADP + H(+). It participates in lipid metabolism; sphingolipid metabolism. Functionally, catalyzes the phosphorylation of sphingoid bases to form sphingoid 1-phosphate (SPP), which have both intra- and extracellular functions. C.elegans contain specific sphingoid bases, which are unique or different in structure compared to the sphingoid bases found in other animals. Two examples of these distinctive compounds are: 15-methylhexadecasphinganine and 15-methylhexadecasphing-4-enine. Required for neurotransmitter release from neuromuscular junctions. Acts by recruiting the synaptic vesicle priming protein unc-13 to synapses. In Caenorhabditis elegans, this protein is Sphingosine kinase 1 (sphk-1).